A 652-amino-acid chain; its full sequence is Acetyl-coenzyme A synthetase (652 aa).

Residues 189-192 (RGGK) and S311 each bind CoA. ATP-binding positions include 387–389 (GEP), 411–416 (DTWWQT), D500, and R515. S523 lines the CoA pocket. R526 provides a ligand contact to ATP. V537, H539, and I542 together coordinate Mg(2+). K584 contacts CoA. An N6-acetyllysine modification is found at K609.

The protein belongs to the ATP-dependent AMP-binding enzyme family. Mg(2+) is required as a cofactor. Acetylated. Deacetylation by the SIR2-homolog deacetylase activates the enzyme.

The enzyme catalyses acetate + ATP + CoA = acetyl-CoA + AMP + diphosphate. Functionally, catalyzes the conversion of acetate into acetyl-CoA (AcCoA), an essential intermediate at the junction of anabolic and catabolic pathways. AcsA undergoes a two-step reaction. In the first half reaction, AcsA combines acetate with ATP to form acetyl-adenylate (AcAMP) intermediate. In the second half reaction, it can then transfer the acetyl group from AcAMP to the sulfhydryl group of CoA, forming the product AcCoA. The chain is Acetyl-coenzyme A synthetase from Bartonella quintana (strain Toulouse) (Rochalimaea quintana).